A 248-amino-acid polypeptide reads, in one-letter code: 1-(5-phosphoribosyl)-5-[(5-phosphoribosylamino)methylideneamino] imidazole-4-carboxamide isomerase (248 aa).

Aspartate 8 acts as the Proton acceptor in catalysis. Aspartate 131 serves as the catalytic Proton donor.

It belongs to the HisA/HisF family.

It localises to the cytoplasm. The enzyme catalyses 1-(5-phospho-beta-D-ribosyl)-5-[(5-phospho-beta-D-ribosylamino)methylideneamino]imidazole-4-carboxamide = 5-[(5-phospho-1-deoxy-D-ribulos-1-ylimino)methylamino]-1-(5-phospho-beta-D-ribosyl)imidazole-4-carboxamide. Its pathway is amino-acid biosynthesis; L-histidine biosynthesis; L-histidine from 5-phospho-alpha-D-ribose 1-diphosphate: step 4/9. The polypeptide is 1-(5-phosphoribosyl)-5-[(5-phosphoribosylamino)methylideneamino] imidazole-4-carboxamide isomerase (Cupriavidus pinatubonensis (strain JMP 134 / LMG 1197) (Cupriavidus necator (strain JMP 134))).